A 344-amino-acid polypeptide reads, in one-letter code: Methionine import ATP-binding protein MetN 1 (344 aa).

Positions 2 to 241 (IEIRNLSQRF…PHHEVTRALI (240 aa)) constitute an ABC transporter domain. 38-45 (GRSGAGKS) is a binding site for ATP.

It belongs to the ABC transporter superfamily. Methionine importer (TC 3.A.1.24) family. The complex is composed of two ATP-binding proteins (MetN), two transmembrane proteins (MetI) and a solute-binding protein (MetQ).

It localises to the cell inner membrane. It carries out the reaction L-methionine(out) + ATP + H2O = L-methionine(in) + ADP + phosphate + H(+). It catalyses the reaction D-methionine(out) + ATP + H2O = D-methionine(in) + ADP + phosphate + H(+). Functionally, part of the ABC transporter complex MetNIQ involved in methionine import. Responsible for energy coupling to the transport system. This Burkholderia mallei (strain ATCC 23344) protein is Methionine import ATP-binding protein MetN 1.